A 428-amino-acid polypeptide reads, in one-letter code: Glutamate-1-semialdehyde 2,1-aminomutase 1 (428 aa).

Lys-268 carries the post-translational modification N6-(pyridoxal phosphate)lysine.

It belongs to the class-III pyridoxal-phosphate-dependent aminotransferase family. HemL subfamily. As to quaternary structure, homodimer. It depends on pyridoxal 5'-phosphate as a cofactor.

The protein resides in the cytoplasm. The catalysed reaction is (S)-4-amino-5-oxopentanoate = 5-aminolevulinate. Its pathway is porphyrin-containing compound metabolism; protoporphyrin-IX biosynthesis; 5-aminolevulinate from L-glutamyl-tRNA(Glu): step 2/2. This is Glutamate-1-semialdehyde 2,1-aminomutase 1 from Geobacillus kaustophilus (strain HTA426).